Reading from the N-terminus, the 212-residue chain is ATP phosphoribosyltransferase (212 aa).

This sequence belongs to the ATP phosphoribosyltransferase family. Short subfamily. As to quaternary structure, heteromultimer composed of HisG and HisZ subunits.

It localises to the cytoplasm. The enzyme catalyses 1-(5-phospho-beta-D-ribosyl)-ATP + diphosphate = 5-phospho-alpha-D-ribose 1-diphosphate + ATP. It participates in amino-acid biosynthesis; L-histidine biosynthesis; L-histidine from 5-phospho-alpha-D-ribose 1-diphosphate: step 1/9. Functionally, catalyzes the condensation of ATP and 5-phosphoribose 1-diphosphate to form N'-(5'-phosphoribosyl)-ATP (PR-ATP). Has a crucial role in the pathway because the rate of histidine biosynthesis seems to be controlled primarily by regulation of HisG enzymatic activity. In Prochlorococcus marinus (strain AS9601), this protein is ATP phosphoribosyltransferase.